We begin with the raw amino-acid sequence, 240 residues long: Dihydromonapterin reductase (240 aa).

Tyr-152 acts as the Proton acceptor in catalysis.

It belongs to the short-chain dehydrogenases/reductases (SDR) family. FolM subfamily.

It catalyses the reaction (6S)-5,6,7,8-tetrahydrofolate + NADP(+) = 7,8-dihydrofolate + NADPH + H(+). The enzyme catalyses 7,8-dihydromonapterin + NADPH + H(+) = 5,6,7,8-tetrahydromonapterin + NADP(+). In terms of biological role, catalyzes the reduction of dihydromonapterin to tetrahydromonapterin. Also has lower activity with dihydrofolate. The sequence is that of Dihydromonapterin reductase (folM) from Citrobacter koseri (strain ATCC BAA-895 / CDC 4225-83 / SGSC4696).